The sequence spans 812 residues: Lon protease (812 aa).

In terms of domain architecture, Lon N-terminal spans Leu-12–Met-205. Gly-357–Thr-364 lines the ATP pocket. Residues Glu-593 to Lys-774 enclose the Lon proteolytic domain. Active-site residues include Ser-680 and Lys-723.

It belongs to the peptidase S16 family. Homohexamer. Organized in a ring with a central cavity.

It localises to the cytoplasm. The catalysed reaction is Hydrolysis of proteins in presence of ATP.. Its function is as follows. ATP-dependent serine protease that mediates the selective degradation of mutant and abnormal proteins as well as certain short-lived regulatory proteins. Required for cellular homeostasis and for survival from DNA damage and developmental changes induced by stress. Degrades polypeptides processively to yield small peptide fragments that are 5 to 10 amino acids long. Binds to DNA in a double-stranded, site-specific manner. This chain is Lon protease, found in Syntrophomonas wolfei subsp. wolfei (strain DSM 2245B / Goettingen).